Here is a 419-residue protein sequence, read N- to C-terminus: Inward rectifier potassium channel 16 (419 aa).

Residues 1 to 67 (MSYYGSSYRI…MVDIFTTLVD (67 aa)) are Cytoplasmic-facing. The helical transmembrane segment at 68–94 (TKWRHMFVIFSLSYILSWLIFGSIFWL) threads the bilayer. The Extracellular segment spans residues 95–117 (IAFHHGDLLSDPDITPCVDNVHS). Positions 118–134 (FTAAFLFSLETQTTIGY) form an intramembrane region, helical; Pore-forming. The Selectivity filter signature appears at 131–136 (TIGYGY). Over 135–143 (GYRCVTEEC) the chain is Extracellular. The chain crosses the membrane as a helical span at residues 144 to 171 (SVAVLTVILQSILSCIINTFIIGAALAK). Over 172-419 (MATARKRAQT…LNRISMESQM (248 aa)) the chain is Cytoplasmic. Serine 358, serine 374, and serine 376 each carry phosphoserine.

The protein belongs to the inward rectifier-type potassium channel (TC 1.A.2.1) family. KCNJ16 subfamily. It forms heteromeric channels with Kir4.1/KCNJ10; this interaction is required for KCNJ16 localization to the basolateral membrane in kidney cells. As a heteromer with KCNJ10, may interact with MAGI1; this interaction may facilitate KCNJ10/KCNJ16 potassium channel expression at the basolateral membrane in kidney cells. May form heteromers with Kir2.1/KCNJ2. Can form heteromeric channels with Kir4.2/KCNJ15. Abundantly expressed in the proximal and distal segments of the nephron.

It localises to the membrane. Its subcellular location is the basolateral cell membrane. The catalysed reaction is K(+)(in) = K(+)(out). Its activity is regulated as follows. Channel activity is strongly regulated by variations of cytosolic pH; channels are activated by alkaline and inhibited by acidic pH values. Activated by phosphatidylinositol 4,5 biphosphate (PtdIns(4,5)P2). Its function is as follows. Inward rectifier potassium channels are characterized by a greater tendency to allow potassium to flow into the cell rather than out of it. Their voltage dependence is regulated by the concentration of extracellular potassium; as external potassium is raised, the voltage range of the channel opening shifts to more positive voltages. The inward rectification is mainly due to the blockage of outward current by internal magnesium. KCNJ16 may be involved in the regulation of fluid and pH balance. In the kidney, together with KCNJ10, mediates basolateral K(+) recycling in distal tubules; this process is critical for Na(+) reabsorption at the tubules. In Mus musculus (Mouse), this protein is Inward rectifier potassium channel 16 (Kcnj16).